The sequence spans 87 residues: Large ribosomal subunit protein bL27c (87 aa).

The segment at 1–20 is disordered; it reads MAHKKGSGSTKNGRDSRSQR.

It belongs to the bacterial ribosomal protein bL27 family.

The protein resides in the plastid. It is found in the chloroplast. This is Large ribosomal subunit protein bL27c from Gracilaria tenuistipitata var. liui (Red alga).